Here is a 2609-residue protein sequence, read N- to C-terminus: Mycosubtilin synthase subunit C (2609 aa).

The domain 1 (D-serine-activating) stretch occupies residues 258-1628 (PREKTIHQLF…RVCAQPEMTV (1371 aa)). Positions 288-695 (TYQELNEKAN…HIPSIQESIV (408 aa)) are adenylation 1. The Carrier 1 domain maps to 771 to 845 (APRTELEKIL…ELVPYVEPVT (75 aa)). Ser806 is subject to O-(pantetheine 4'-phosphoryl)serine. The epimerization 1 stretch occupies residues 853–1312 (IKGPALLTPI…EISIDELDQF (460 aa)). The condensation 1 stretch occupies residues 1322 to 1623 (IENIYPLTPM…NTIPVRVCAQ (302 aa)). The interval 1778-2359 (PKEKTIYQLF…AHAIQAAALP (582 aa)) is domain 2 (isoleucine-activating). The interval 1808–2205 (TYRQLNEQAN…LVESVKEAVV (398 aa)) is adenylation 2. Positions 2282–2357 (APRTLIEKQL…TMAHAIQAAA (76 aa)) constitute a Carrier 2 domain. O-(pantetheine 4'-phosphoryl)serine is present on Ser2317. Positions 2375 to 2581 (IPVFCFPPLI…ENMSTIRSIM (207 aa)) are thioesterase.

It belongs to the ATP-dependent AMP-binding enzyme family. It depends on pantetheine 4'-phosphate as a cofactor.

This protein is a multifunctional enzyme, able to activate and polymerize the amino acids Ser and Asn as part of the synthesis of mycosubtilin. The Ser residue is further epimerized to the D-isomer form. The activation sites for these amino acids consist of individual domains. This is Mycosubtilin synthase subunit C (mycC) from Bacillus subtilis.